The primary structure comprises 717 residues: Delta-1-pyrroline-5-carboxylate synthase (717 aa).

Residues 1-296 (METVDSTRAF…WASIGETDAR (296 aa)) form a glutamate 5-kinase region. Residues Ser-60, Asp-157, and Asn-176 each contribute to the substrate site. ATP contacts are provided by residues 196–197 (SD) and 236–242 (RGGMTAK). The gamma-glutamyl phosphate reductase stretch occupies residues 297-717 (EMAVAARACS…YSHKDLTQQG (421 aa)).

It in the N-terminal section; belongs to the glutamate 5-kinase family. The protein in the C-terminal section; belongs to the gamma-glutamyl phosphate reductase family. In terms of tissue distribution, expressed at high levels in leaves and is inducible in roots subjected to salt stress.

The enzyme catalyses L-glutamate + ATP = L-glutamyl 5-phosphate + ADP. It catalyses the reaction L-glutamate 5-semialdehyde + phosphate + NADP(+) = L-glutamyl 5-phosphate + NADPH + H(+). Its pathway is amino-acid biosynthesis; L-proline biosynthesis; L-glutamate 5-semialdehyde from L-glutamate: step 1/2. The protein operates within amino-acid biosynthesis; L-proline biosynthesis; L-glutamate 5-semialdehyde from L-glutamate: step 2/2. Feedback regulated by proline. P5CS plays a key role in proline biosynthesis, leading to osmoregulation in plants. This is Delta-1-pyrroline-5-carboxylate synthase (PRO2) from Solanum lycopersicum (Tomato).